The following is a 260-amino-acid chain: 14-3-3-like protein (260 aa).

This sequence belongs to the 14-3-3 family.

The protein is 14-3-3-like protein of Pisum sativum (Garden pea).